The chain runs to 369 residues: UDP-N-acetylglucosamine--N-acetylmuramyl-(pentapeptide) pyrophosphoryl-undecaprenol N-acetylglucosamine transferase (369 aa).

UDP-N-acetyl-alpha-D-glucosamine is bound by residues 10–12 (TAG), asparagine 124, arginine 166, serine 196, isoleucine 251, and glutamine 296.

This sequence belongs to the glycosyltransferase 28 family. MurG subfamily.

It localises to the cell membrane. It catalyses the reaction di-trans,octa-cis-undecaprenyl diphospho-N-acetyl-alpha-D-muramoyl-L-alanyl-D-glutamyl-meso-2,6-diaminopimeloyl-D-alanyl-D-alanine + UDP-N-acetyl-alpha-D-glucosamine = di-trans,octa-cis-undecaprenyl diphospho-[N-acetyl-alpha-D-glucosaminyl-(1-&gt;4)]-N-acetyl-alpha-D-muramoyl-L-alanyl-D-glutamyl-meso-2,6-diaminopimeloyl-D-alanyl-D-alanine + UDP + H(+). It functions in the pathway cell wall biogenesis; peptidoglycan biosynthesis. In terms of biological role, cell wall formation. Catalyzes the transfer of a GlcNAc subunit on undecaprenyl-pyrophosphoryl-MurNAc-pentapeptide (lipid intermediate I) to form undecaprenyl-pyrophosphoryl-MurNAc-(pentapeptide)GlcNAc (lipid intermediate II). This Acetivibrio thermocellus (strain ATCC 27405 / DSM 1237 / JCM 9322 / NBRC 103400 / NCIMB 10682 / NRRL B-4536 / VPI 7372) (Clostridium thermocellum) protein is UDP-N-acetylglucosamine--N-acetylmuramyl-(pentapeptide) pyrophosphoryl-undecaprenol N-acetylglucosamine transferase.